The sequence spans 564 residues: Cytochrome c oxidase subunit 1 (564 aa).

Residues 1–23 form a disordered region; sequence MTAVAPRLENYAEPTRPAPTGGA. A run of 7 helical transmembrane segments spans residues 43–63, 83–103, 122–142, 171–191, 214–234, 259–279, and 292–312; these read MMYI…ALLI, LFTL…VWGF, LNAF…AGFL, FWII…VNMI, IFVA…AALG, LFWF…FGIV, and FGYI…MAVW. Residue His-87 coordinates Fe(II)-heme a. Cu cation-binding residues include His-265 and Tyr-269. Positions 265 to 269 form a cross-link, 1'-histidyl-3'-tyrosine (His-Tyr); sequence HPEVY. Cu cation contacts are provided by His-314 and His-315. 2 helical membrane-spanning segments follow: residues 316 to 336 and 360 to 380; these read MFVT…LISV and MTWT…GIML. Heme a3 is bound at residue His-398. The next 3 membrane-spanning stretches (helical) occupy residues 399 to 419, 434 to 454, and 477 to 497; these read FHYT…YFWF, IHFW…HWVG, and ISTV…WNVF. His-400 contributes to the Fe(II)-heme a binding site.

It belongs to the heme-copper respiratory oxidase family. Associates with subunits II, III and IV to form cytochrome c oxidase. Cu(2+) is required as a cofactor. Heme serves as cofactor.

The protein localises to the cell membrane. It catalyses the reaction 4 Fe(II)-[cytochrome c] + O2 + 8 H(+)(in) = 4 Fe(III)-[cytochrome c] + 2 H2O + 4 H(+)(out). It functions in the pathway energy metabolism; oxidative phosphorylation. Cytochrome c oxidase is the component of the respiratory chain that catalyzes the reduction of oxygen to water. Subunits 1-3 form the functional core of the enzyme complex. CO I is the catalytic subunit of the enzyme. Electrons originating in cytochrome c are transferred via the copper A center of subunit 2 and heme A of subunit 1 to the bimetallic center formed by heme A3 and copper B. This chain is Cytochrome c oxidase subunit 1 (ctaD), found in Corynebacterium diphtheriae (strain ATCC 700971 / NCTC 13129 / Biotype gravis).